We begin with the raw amino-acid sequence, 344 residues long: D-beta-hydroxybutyrate dehydrogenase, mitochondrial (344 aa).

The transit peptide at 1–46 (MLTARLSRPLSQLPRKTLNFSDRENGTRGSLLLYSAPFVPVGRRTY) directs the protein to the mitochondrion. Position 59–83 (59–83 (LITGCDSGFGFSLAKHLHSEGFLVF)) interacts with NAD(+). Residues Lys73 and Lys97 each carry the N6-acetyllysine modification. Lys103 is subject to N6-acetyllysine; alternate. The residue at position 103 (Lys103) is an N6-succinyllysine; alternate. N6-acetyllysine is present on Lys177. Substrate is bound at residue Ser195. The Proton acceptor role is filled by Tyr208. An N6-acetyllysine modification is found at Lys212. Ser219 carries an O-linked (GlcNAc) serine glycan. At Ser246 the chain carries Phosphoserine. Lys260 is subject to N6-acetyllysine; alternate. N6-succinyllysine; alternate is present on Lys260. Position 281 is an N6-acetyllysine (Lys281).

Belongs to the short-chain dehydrogenases/reductases (SDR) family. In terms of assembly, homotetramer.

Its subcellular location is the mitochondrion inner membrane. The protein localises to the mitochondrion matrix. The catalysed reaction is (R)-3-hydroxybutanoate + NAD(+) = acetoacetate + NADH + H(+). With respect to regulation, requires phosphatidylcholine as an allosteric activator for enzymatic activity. In Bos taurus (Bovine), this protein is D-beta-hydroxybutyrate dehydrogenase, mitochondrial.